A 1186-amino-acid chain; its full sequence is Pesticidal crystal protein Cry14Aa (1186 aa).

The protein belongs to the delta endotoxin family.

In terms of biological role, promotes colloidosmotic lysis by binding to the midgut epithelial cells of insects. The sequence is that of Pesticidal crystal protein Cry14Aa (cry14Aa) from Bacillus thuringiensis subsp. sotto.